The sequence spans 439 residues: Ribulose bisphosphate carboxylase/oxygenase activase, chloroplastic (439 aa).

167 to 174 (GGKGQGKS) lines the ATP pocket.

The protein belongs to the RuBisCO activase family.

It is found in the plastid. It localises to the chloroplast stroma. Its function is as follows. Activation of RuBisCO (ribulose-1,5-bisphosphate carboxylase/oxygenase; EC 4.1.1.39) involves the ATP-dependent carboxylation of the epsilon-amino group of lysine leading to a carbamate structure. The protein is Ribulose bisphosphate carboxylase/oxygenase activase, chloroplastic (RCA) of Vigna radiata var. radiata (Mung bean).